Reading from the N-terminus, the 410-residue chain is Squalene synthase 1 (410 aa).

Gly-2 carries the N-acetylglycine modification. 2 helical membrane-spanning segments follow: residues 283–303 (SIFRFCAIPQIMAIGTLALCY) and 387–407 (QPNSVFIIMVVILLAIVFAYL).

This sequence belongs to the phytoene/squalene synthase family. The cofactor is Mg(2+). Mn(2+) serves as cofactor. In terms of tissue distribution, expressed in all tissues analyzed (seedlings, cotyledons, inflorescences, siliques, leaves, stems and roots). Highly expressed in roots and pollen.

The protein resides in the endoplasmic reticulum membrane. It catalyses the reaction 2 (2E,6E)-farnesyl diphosphate + NADPH + H(+) = squalene + 2 diphosphate + NADP(+). It carries out the reaction 2 (2E,6E)-farnesyl diphosphate + NADH + H(+) = squalene + 2 diphosphate + NAD(+). The protein operates within terpene metabolism; lanosterol biosynthesis; lanosterol from farnesyl diphosphate: step 1/3. This Arabidopsis thaliana (Mouse-ear cress) protein is Squalene synthase 1.